The following is a 560-amino-acid chain: Vanillyl-alcohol oxidase (560 aa).

In terms of domain architecture, FAD-binding PCMH-type spans 67–272 (DYFLASAIVA…TKIGIWLMPN (206 aa)). Residue Y108 is part of the active site. At H422 the chain carries Tele-8alpha-FAD histidine. Active-site residues include Y503 and R504.

This sequence to bacterial flavocytochrome p-cresol methyl hydroxylase. In terms of assembly, homooctamer (tetramer of tightly interacting dimers). FAD serves as cofactor.

It localises to the peroxisome. It is found in the cytoplasm. It catalyses the reaction 4-hydroxy-3-methoxy-benzenemethanol + O2 = vanillin + H2O2. With respect to regulation, competitively inhibited by cinnamyl and coniferyl alcohols and by isoeugenol. Functionally, catalyzes the conversion of vanillin alcohol to vanillin, and also the conversion of a wide range of phenolic compounds bearing side chains of variable size at the para position of the aromatic ring. Crucial for the degradation of the secondary metabolites derived from the degradation of the lignin. Catalyzes besides the oxidation of 4-hydroxybenzyl alcohols, the oxidative deamination of 4-hydroxybenzylamines, the oxidative demethylation of 4-(methoxy-methyl)phenols and the oxidative hydration of 4-allylphenols. Most active with 4-allylphenols. The protein is Vanillyl-alcohol oxidase (VAOA) of Penicillium simplicissimum.